We begin with the raw amino-acid sequence, 443 residues long: Enolase (443 aa).

Glutamine 167 is a binding site for (2R)-2-phosphoglycerate. The active-site Proton donor is the glutamate 209. Mg(2+)-binding residues include aspartate 246, glutamate 291, and aspartate 318. Positions 343, 372, 373, and 394 each coordinate (2R)-2-phosphoglycerate. Lysine 343 acts as the Proton acceptor in catalysis.

The protein belongs to the enolase family. In terms of assembly, component of the RNA degradosome, a multiprotein complex involved in RNA processing and mRNA degradation. It depends on Mg(2+) as a cofactor.

The protein resides in the cytoplasm. It localises to the secreted. The protein localises to the cell surface. The enzyme catalyses (2R)-2-phosphoglycerate = phosphoenolpyruvate + H2O. It functions in the pathway carbohydrate degradation; glycolysis; pyruvate from D-glyceraldehyde 3-phosphate: step 4/5. Functionally, catalyzes the reversible conversion of 2-phosphoglycerate (2-PG) into phosphoenolpyruvate (PEP). It is essential for the degradation of carbohydrates via glycolysis. In Wigglesworthia glossinidia brevipalpis, this protein is Enolase.